The sequence spans 403 residues: Histidine--tRNA ligase (403 aa).

Belongs to the class-II aminoacyl-tRNA synthetase family. Homodimer.

The protein resides in the cytoplasm. It carries out the reaction tRNA(His) + L-histidine + ATP = L-histidyl-tRNA(His) + AMP + diphosphate + H(+). In Sulfurovum sp. (strain NBC37-1), this protein is Histidine--tRNA ligase.